The following is a 387-amino-acid chain: MISMKKYDVVIIGAGPAGSYAAYMLAKSKINVLVIDKYSFPRYKPCAGGLTAKAFNSFDFPISKEVKYSTNSIVTSYKNQIFHNISGNKTLVKMIERKEFDDFLIKKAVDSGATFLDGMKVTEITWENAEFSIKTDSEFFRCNYLIGADGTNGIVNRTFNIVERDLYGFAVEINCPVSRDNIGKFNMTFDFGTVPNGYLWIFPKDEYVCVGAYTTNRKMKNIQKYLLDYIEKLGLVPESEKLKGHIIPYYGINYKQPDFPCVLVGDAAGFGEYWTGEGIYYAVKSGTIAAEVISSSIKSGIFDRQALQRRYQREIIRGLKLAYYIGKFFYGNLPLSFNLVMSYLPVGIMYESASRGLTFDQSFSKIHVALSSLILNKSHISNNKYHR.

The protein belongs to the geranylgeranyl reductase family. ChlP subfamily.

This is an uncharacterized protein from Methanosarcina barkeri (strain Fusaro / DSM 804).